A 344-amino-acid chain; its full sequence is Ion-translocating oxidoreductase complex subunit D (344 aa).

Transmembrane regions (helical) follow at residues 23–43 (LVLG…GAGT), 44–64 (LLNL…MLAL), 80–100 (VTAL…LTLV), and 120–140 (PFNP…LEMT). An FMN phosphoryl threonine modification is found at Thr-172. A run of 5 helical transmembrane segments spans residues 198–218 (LGGA…LFLL), 222–242 (LFTW…SLLF), 252–272 (GSPL…FIVT), 285–305 (LLFG…GGYP), and 306–326 (DGVA…DYYT).

The protein belongs to the NqrB/RnfD family. The complex is composed of six subunits: RnfA, RnfB, RnfC, RnfD, RnfE and RnfG. FMN is required as a cofactor.

It is found in the cell inner membrane. Its function is as follows. Part of a membrane-bound complex that couples electron transfer with translocation of ions across the membrane. This chain is Ion-translocating oxidoreductase complex subunit D, found in Pseudomonas paraeruginosa (strain DSM 24068 / PA7) (Pseudomonas aeruginosa (strain PA7)).